Consider the following 339-residue polypeptide: UDP-N-acetylenolpyruvoylglucosamine reductase (339 aa).

The 171-residue stretch at 19-189 (VDVQARLFAE…LRVRFKLSRV (171 aa)) folds into the FAD-binding PCMH-type domain. R166 is an active-site residue. The active-site Proton donor is the S239. The active site involves E335.

This sequence belongs to the MurB family. FAD is required as a cofactor.

The protein resides in the cytoplasm. The enzyme catalyses UDP-N-acetyl-alpha-D-muramate + NADP(+) = UDP-N-acetyl-3-O-(1-carboxyvinyl)-alpha-D-glucosamine + NADPH + H(+). The protein operates within cell wall biogenesis; peptidoglycan biosynthesis. Cell wall formation. The sequence is that of UDP-N-acetylenolpyruvoylglucosamine reductase from Pseudomonas savastanoi pv. phaseolicola (strain 1448A / Race 6) (Pseudomonas syringae pv. phaseolicola (strain 1448A / Race 6)).